A 212-amino-acid polypeptide reads, in one-letter code: Transmembrane protein 186 (212 aa).

The Mitochondrial matrix segment spans residues 1 to 78; sequence MAAVLRAVAR…YLSRLKVAQT (78 aa). A helical membrane pass occupies residues 79 to 99; sequence ALTVAALPPGLYCYSQGLMPF. Over 100–101 the chain is Mitochondrial intermembrane; that stretch reads SS. The chain crosses the membrane as a helical span at residues 102 to 122; sequence LCLAGGVAGFALAMLCWMSHF. The Mitochondrial matrix segment spans residues 123 to 212; the sequence is FRRLVGILYV…QVFGVLDALK (90 aa).

Belongs to the TMEM186 family. Part of the mitochondrial complex I assembly/MCIA complex that comprises at least the core subunits TMEM126B, NDUFAF1, ECSIT and ACAD9 and complement subunits such as COA1 and TMEM186. Interacts with MT-ND3.

It is found in the mitochondrion inner membrane. Its function is as follows. As part of the MCIA complex, required for efficient assembly of the mitochondrial complex I. In Bos taurus (Bovine), this protein is Transmembrane protein 186.